The sequence spans 371 residues: Putative glutamate--cysteine ligase 2 (371 aa).

This sequence belongs to the glutamate--cysteine ligase type 2 family. YbdK subfamily.

The enzyme catalyses L-cysteine + L-glutamate + ATP = gamma-L-glutamyl-L-cysteine + ADP + phosphate + H(+). In terms of biological role, ATP-dependent carboxylate-amine ligase which exhibits weak glutamate--cysteine ligase activity. In Burkholderia lata (strain ATCC 17760 / DSM 23089 / LMG 22485 / NCIMB 9086 / R18194 / 383), this protein is Putative glutamate--cysteine ligase 2.